We begin with the raw amino-acid sequence, 760 residues long: Ring-infected erythrocyte surface antigen (760 aa).

The tract at residues D214–A300 is disordered. The span at S216 to V230 shows a compositional bias: acidic residues. Over residues D231–D242 the composition is skewed to basic and acidic residues. Residues E243–V256 are compositionally biased toward acidic residues. Residues A262–E288 show a composition bias toward basic and acidic residues. The J domain maps to D307–D375. 3 N-linked (GlcNAc...) asparagine glycosylation sites follow: N425, N559, and N563. Residues E683 to H692 show a composition bias toward basic and acidic residues. The disordered stretch occupies residues E683–P738. The segment covering D693–N720 has biased composition (acidic residues).

The protein localises to the cell membrane. Its function is as follows. May disrupt the normal intermolecular interactions of the cytoplasmic domain of band 3 and thereby facilitate the invagination of the red cell membrane which is necessary for the formation of the parasitophorous vacuole. This Plasmodium falciparum (isolate NF7 / Ghana) protein is Ring-infected erythrocyte surface antigen (RESA).